The chain runs to 170 residues: Large ribosomal subunit protein uL11 (170 aa).

Belongs to the universal ribosomal protein uL11 family. In terms of assembly, part of the ribosomal stalk of the 50S ribosomal subunit. Interacts with L10 and the large rRNA to form the base of the stalk. L10 forms an elongated spine to which L12 dimers bind in a sequential fashion forming a multimeric L10(L12)X complex.

Its function is as follows. Forms part of the ribosomal stalk which helps the ribosome interact with GTP-bound translation factors. The polypeptide is Large ribosomal subunit protein uL11 (Saccharolobus islandicus (strain M.16.27) (Sulfolobus islandicus)).